Reading from the N-terminus, the 378-residue chain is Vacuolar membrane protein CAGL0J10076g (378 aa).

Residues 18–70 form a disordered region; that stretch reads RGLPRLVTTSTTPTPTTEPTTEPTTTKDETSQTSATDASTATTSTAATSTAAT. Low complexity-rich tracts occupy residues 25-41 and 48-70; these read TTSTTPTPTTEPTTEPT and SQTSATDASTATTSTAATSTAAT. The chain crosses the membrane as a helical span at residues 118–138; it reads FIAVGSIAGAILMLIFLWWSI. Positions 299 to 368 are disordered; sequence NDYDTPLIPD…ARDHRKTPSM (70 aa). Residues 321–337 show a composition bias toward basic residues; the sequence is RSHRKTPSNDKYHRRNR. Residues 343–356 are compositionally biased toward low complexity; the sequence is SPSRSPTRTPIRTR.

Belongs to the PRM5 family.

Its subcellular location is the vacuole membrane. This is Vacuolar membrane protein CAGL0J10076g from Candida glabrata (strain ATCC 2001 / BCRC 20586 / JCM 3761 / NBRC 0622 / NRRL Y-65 / CBS 138) (Yeast).